Reading from the N-terminus, the 1097-residue chain is Translation initiation factor IF-2 (1097 aa).

The tract at residues 79 to 458 is disordered; the sequence is LEKRVSPQAD…RVIKKKPKKA (380 aa). Over residues 97-112 the composition is skewed to basic and acidic residues; the sequence is AKKEASQEKADAHAKL. Over residues 157 to 173 the composition is skewed to low complexity; the sequence is AATLAVEEAPIAAAPTE. 2 stretches are compositionally biased toward basic and acidic residues: residues 174–190 and 202–221; these read EPMH…KIDS and VEVH…HAEE. The span at 224–236 shows a compositional bias: low complexity; it reads TPTTEASSEETSA. Residues 258–267 show a composition bias toward polar residues; it reads RKTQNTTNVS. Residues 268–286 show a composition bias toward basic and acidic residues; it reads EENKQHEKQPETLKSDKAM. Residues 340-363 show a composition bias toward polar residues; it reads SDSLQAEISRQQNEISNRFSQSEN. The segment covering 376–385 has biased composition (basic residues); sequence HKKKRKRKKN. The span at 402–443 shows a compositional bias: basic and acidic residues; it reads PKQEEKPVKKEKPKEREKPAAGKKEQTPGKKPVREDQKERVL. The tr-type G domain maps to 591 to 761; it reads TRPPVVTIMG…LVEAELLELK (171 aa). A G1 region spans residues 600 to 607; it reads GHVDHGKT. A GTP-binding site is contributed by 600 to 607; sequence GHVDHGKT. The interval 625-629 is G2; that stretch reads GITQH. The segment at 647-650 is G3; sequence DTPG. GTP is bound by residues 647 to 651 and 701 to 704; these read DTPGH and NKID. The tract at residues 701 to 704 is G4; sequence NKID. The interval 737 to 739 is G5; sequence SAK.

The protein belongs to the TRAFAC class translation factor GTPase superfamily. Classic translation factor GTPase family. IF-2 subfamily.

Its subcellular location is the cytoplasm. One of the essential components for the initiation of protein synthesis. Protects formylmethionyl-tRNA from spontaneous hydrolysis and promotes its binding to the 30S ribosomal subunits. Also involved in the hydrolysis of GTP during the formation of the 70S ribosomal complex. The chain is Translation initiation factor IF-2 from Chloroherpeton thalassium (strain ATCC 35110 / GB-78).